Consider the following 628-residue polypeptide: MNAPDKLATLLSLTREPFPASRKSYLQGSRSDLRVPMREVTLTNGETVSLYDTSGPYTEPGVAIDVRRGLPSVRTPWLDERADTEVYAGRLHQALDDGAKHEDREAERIEQLRLDAAALQRPPRRARAGANVTQMHYARRGIVTPEMEYVALRENGKREWMREYLGDAPREQRLRGNPMGAQIPAIVTPEFVRDEVARGRAIIPANINHPEVEPMAIGRNFLVKINANIGNSAVTSSIEEEVEKLVWAIRWGADNVMDLSTGRNIHTTRDWILRNSPVPIGTVPIYQALEKVGGVAEDLTWAIFRDTLIEQAEQGVDYFTIHAGVRLPFIHLTADRRTGIVSRGGSIMAKWCISHHRESFIYEHFEDICDIMKAYDVSFSLGDGLRPGSAADANDEAQFAELRTLGELTQVAWKHDVQTMIEGPGHVPMHMIQANMDEQLKHCHEAPFYTLGPLTIDIAPGYDHIASAIGAAMIGWFGTAMLCYVTPKEHLGLPDREDVKQGIVAYKIAAHAADVAKGHPGARARDDALSKARFEFRWMDQFNLSLDPDTARDFHDETLPKDASKVAHFCSMCGPKFCSMKITQEVRDYAAQRGVSEAQALGAGMAEKSSQFRQAGGEIYIPLAVDKG.

Substrate-binding positions include asparagine 228, methionine 257, tyrosine 286, histidine 322, 342–344 (SRG), 383–386 (DGLR), and glutamate 422. Histidine 426 contributes to the Zn(2+) binding site. Tyrosine 449 serves as a coordination point for substrate. Histidine 490 provides a ligand contact to Zn(2+). Residues cysteine 570, cysteine 573, and cysteine 578 each contribute to the [4Fe-4S] cluster site.

Belongs to the ThiC family. In terms of assembly, homodimer. [4Fe-4S] cluster serves as cofactor.

It carries out the reaction 5-amino-1-(5-phospho-beta-D-ribosyl)imidazole + S-adenosyl-L-methionine = 4-amino-2-methyl-5-(phosphooxymethyl)pyrimidine + CO + 5'-deoxyadenosine + formate + L-methionine + 3 H(+). The protein operates within cofactor biosynthesis; thiamine diphosphate biosynthesis. In terms of biological role, catalyzes the synthesis of the hydroxymethylpyrimidine phosphate (HMP-P) moiety of thiamine from aminoimidazole ribotide (AIR) in a radical S-adenosyl-L-methionine (SAM)-dependent reaction. The protein is Phosphomethylpyrimidine synthase of Methylibium petroleiphilum (strain ATCC BAA-1232 / LMG 22953 / PM1).